Consider the following 367-residue polypeptide: MMETQLYIGIMSGTSMDGADAVLIRMDGGKWLGAEGHAFTPYPGRLRRKLLDLQDTGADELHRSRMLSQELSRLYAQTAAELLCSQNLAPSDITALGCHGQTVRHAPEHSYSVQLADLPLLAERTQIFTVGDFRSRDLAAGGQGAPLVPAFHEALFRDDRETRAVLNIGGIANISVLPPDAPAFGFDTGPGNMLMDAWMQAHWQLPYDKNGAKAAQGNILPQLLDRLLAHPYFAQPHPKSTGRELFALNWLETYLDGGENRYDVLRTLSRFTAQTVFDAVSHAAADARQMYICGGGIRNPVLMADLAECFGTRVSLHSTAELNLDPQWVEAAAFAWMAACWVNRIPGSPHKATGASKPCILGAGYYY.

13–20 (GTSMDGAD) lines the ATP pocket.

Belongs to the anhydro-N-acetylmuramic acid kinase family.

It catalyses the reaction 1,6-anhydro-N-acetyl-beta-muramate + ATP + H2O = N-acetyl-D-muramate 6-phosphate + ADP + H(+). It functions in the pathway amino-sugar metabolism; 1,6-anhydro-N-acetylmuramate degradation. Its pathway is cell wall biogenesis; peptidoglycan recycling. Its function is as follows. Catalyzes the specific phosphorylation of 1,6-anhydro-N-acetylmuramic acid (anhMurNAc) with the simultaneous cleavage of the 1,6-anhydro ring, generating MurNAc-6-P. Is required for the utilization of anhMurNAc either imported from the medium or derived from its own cell wall murein, and thus plays a role in cell wall recycling. This chain is Anhydro-N-acetylmuramic acid kinase, found in Neisseria meningitidis serogroup A / serotype 4A (strain DSM 15465 / Z2491).